The chain runs to 604 residues: Protein CBFA2T2 (604 aa).

Positions 25-105 (KRVPAMPGSP…SSTSSALTNQ (81 aa)) are disordered. Phosphoserine is present on S33. K38 participates in a covalent cross-link: Glycyl lysine isopeptide (Lys-Gly) (interchain with G-Cter in SUMO2). The segment covering 46-59 (PTMPPLPPINPGGP) has biased composition (pro residues). Polar residues-rich tracts occupy residues 64-79 (FTPTALSNGINHSPPT) and 88-105 (QRFSNGPASSTSSALTNQ). The interaction with PRDM14 stretch occupies residues 107–215 (LPATCGARQL…QHEHLLLNTS (109 aa)). In terms of domain architecture, TAFH spans 113-208 (ARQLSKLKRF…TPSQYLAQHE (96 aa)). The tract at residues 229 to 265 (VHGNGKRPSPERREENSFDRDTIAPEPPAKRVCTISP) is disordered. The segment covering 236-251 (PSPERREENSFDRDTI) has biased composition (basic and acidic residues). Phosphoserine is present on S264. Residues 331-377 (QDELVDHRLTEREWADEWKHLDHALNCIMEMVEKTRRSMAVLRRCQE) are nervy homology region 2 (NHR2). The interval 397-427 (RKTGTELVSRQHSPGSADSLSNDSQREFNSR) is disordered. Polar residues predominate over residues 402-419 (ELVSRQHSPGSADSLSND). Phosphoserine is present on S409. The interval 435 to 484 (VEFWKKTEEAVNKVKIQAMSEVQKAVAEAEQKAFEVIATERARMEQTIAD) is nervy homology region 3 (NHR3). Residue K449 forms a Glycyl lysine isopeptide (Lys-Gly) (interchain with G-Cter in SUMO2) linkage. The stretch at 451–491 (QAMSEVQKAVAEAEQKAFEVIATERARMEQTIADVKRQAAE) forms a coiled coil. The Zn(2+) site is built by C507, C510, C518, C521, C527, C531, H539, and C543. The MYND-type zinc-finger motif lies at 507–543 (CWNCGRKASETCSGCNIARYCGSFCQHKDWERHHRLC). The disordered stretch occupies residues 547–604 (LHGQSPHGQGRPLLPVGRGSSARSADCSVPSPALDKTSATTSRSSTPASVTAIDTNGL). Phosphoserine is present on S577. The segment covering 583 to 598 (TSATTSRSSTPASVTA) has biased composition (low complexity).

This sequence belongs to the CBFA2T family. In terms of assembly, homooligomer. Homotetramerization is mediated by nervy homology region 2. Can interact with RUNX1T1/CBFA2T1 and CBFA2T3/MTG16; heterotetramerization between members of the CBFA2T family is proposed. Forms a heterooligomer with the AML1-MTG8/ETO fusion protein. Interacts with PRDM14. Interacts with RBPJ, GFI1, TCF4. Interacts with TAL1 and CBFA2T3/MTG16; the heteromer with CBFA2T3/MTG16 may function in repression of TAL1. In terms of tissue distribution, ubiquitously expressed in fetal and adult tissues. Highly expressed in adult brain, heart, lung, kidney, lymph node, appendix, thymus, testis, uterus, small intestine, prostate and thymus.

It localises to the nucleus. In terms of biological role, transcriptional corepressor which facilitates transcriptional repression via its association with DNA-binding transcription factors and recruitment of other corepressors and histone-modifying enzymes. Via association with PRDM14 is involved in regulation of embryonic stem cell (ESC) pluripotency. Involved in primordial germ cell (PCG) formation. Stabilizes PRDM14 and OCT4 on chromatin in a homooligomerization-dependent manner. Can repress the expression of MMP7 in a ZBTB33-dependent manner. May function as a complex with the chimeric protein RUNX1/AML1-CBFA2T1/MTG8 (AML1-MTG8/ETO fusion protein) which is produced in acute myeloid leukemia with the chromosomal translocation t(8;21). May thus be involved in the repression of AML1-dependent transcription and the induction of G-CSF/CSF3-dependent cell growth. May be a tumor suppressor gene candidate involved in myeloid tumors with the deletion of the 20q11 region. Through heteromerization with CBFA2T3/MTG16 may be involved in regulation of the proliferation and the differentiation of erythroid progenitors by repressing the expression of TAL1 target genes. Required for the maintenance of the secretory cell lineage in the small intestine. Can inhibit Notch signaling probably by association with RBPJ and may be involved in GFI1-mediated Paneth cell differentiation. This Homo sapiens (Human) protein is Protein CBFA2T2 (CBFA2T2).